The sequence spans 187 residues: Protein GrpE (187 aa).

A disordered region spans residues 1–25; it reads MADEQNLDNRAPEETPAAEGTSAGE.

Belongs to the GrpE family. As to quaternary structure, homodimer.

It localises to the cytoplasm. In terms of biological role, participates actively in the response to hyperosmotic and heat shock by preventing the aggregation of stress-denatured proteins, in association with DnaK and GrpE. It is the nucleotide exchange factor for DnaK and may function as a thermosensor. Unfolded proteins bind initially to DnaJ; upon interaction with the DnaJ-bound protein, DnaK hydrolyzes its bound ATP, resulting in the formation of a stable complex. GrpE releases ADP from DnaK; ATP binding to DnaK triggers the release of the substrate protein, thus completing the reaction cycle. Several rounds of ATP-dependent interactions between DnaJ, DnaK and GrpE are required for fully efficient folding. The chain is Protein GrpE from Azotobacter vinelandii (strain DJ / ATCC BAA-1303).